Reading from the N-terminus, the 1087-residue chain is Synaptopodin-2 (1087 aa).

The 83-residue stretch at 6-88 (FICISMTGGA…SLHLLVKRPS (83 aa)) folds into the PDZ domain. 3 disordered regions span residues 24–52 (GKEEQQPLQVAKIRSQSKASGSGLREGDE), 88–112 (SSGTSETLDSESETTNHQHLTHEGP), and 207–272 (GPIV…AGLP). Over residues 101–112 (TTNHQHLTHEGP) the composition is skewed to basic and acidic residues. 2 stretches are compositionally biased toward polar residues: residues 207-230 (GPIVTLQGNDKSTSPDPDWSSQLE) and 246-255 (TSLTSSTSSG). Phosphoserine occurs at positions 300, 319, and 320. Residues 320-359 (SEGTEHGEDQRSGKDQSRPHKHRARHARLRRSESLSEKQV) form a disordered region. Positions 322–337 (GTEHGEDQRSGKDQSR) are enriched in basic and acidic residues. Threonine 323 carries the post-translational modification Phosphothreonine. Residues 338-348 (PHKHRARHARL) show a composition bias toward basic residues. Over residues 349–359 (RRSESLSEKQV) the composition is skewed to basic and acidic residues. Residues 388 to 396 (KKRRRRARK) carry the Nuclear localization signal motif. Phosphoserine occurs at positions 540, 541, 543, and 546. An interaction with YWHAB region spans residues 551 to 557 (RSLASVP). Phosphoserine; by PKA is present on serine 555. Disordered regions lie at residues 581–817 (AKPF…ALNL) and 832–863 (NYTPKPSAPTPLVNAAPAGAGGPSNELPGMSG). Serine 596 is modified (phosphoserine). The interaction with YWHAB stretch occupies residues 599–804 (RSVTSPISDF…AVSSIKIAQP (206 aa)). A Phosphothreonine; by PKA and CaMK2 modification is found at threonine 602. Serine 603 carries the phosphoserine modification. Composition is skewed to pro residues over residues 609–622 (PAPPPYSAVSPPPE) and 636–647 (AQPPPWPQPAPW). A PPPY motif motif is present at residues 611–614 (PPPY). Tyrosine 614 bears the Phosphotyrosine mark. A Phosphoserine modification is found at serine 618. Positions 656–796 (SEQIASRDER…PPNPPQVTAV (141 aa)) are F-actin binding. Positions 656–909 (SEQIASRDER…LPASWKYSSN (254 aa)) are F-actin bundling activity. 2 interaction with ACTN2 regions span residues 656-917 (SEQI…PPVA) and 894-1087 (QSPT…VVEE). Residues serine 697 and serine 719 each carry the phosphoserine modification. Residues 740–893 (AKQKTPPPVA…DTVQAHTVRA (154 aa)) form an actin binding region. Phosphothreonine is present on threonine 744. Over residues 751–777 (KPAVKSPSSSQPVAPVSPVWSPGVAPA) the composition is skewed to low complexity. Serine 767 and serine 771 each carry phosphoserine. Residues 781 to 797 (AFSTSNPPNPPQVTAVS) show a composition bias toward polar residues. An interaction with FLNC region spans residues 803–1087 (QPAAPPARPA…QVWKPSVVEE (285 aa)). A phosphoserine mark is found at serine 895, serine 899, and serine 903. Disordered stretches follow at residues 930–952 (AIKSQPPGAQASKTSKKKGKKPL), 970–1012 (FTFQ…PTNA), and 1037–1060 (PVSASPVPVSVPTSPKQESTSTSY). An interaction with ZYX region spans residues 993-1012 (PAMKQALPPRQANVGSPTNA). Phosphoserine occurs at positions 1008 and 1050. The span at 1037 to 1051 (PVSASPVPVSVPTSP) shows a compositional bias: low complexity.

This sequence belongs to the synaptopodin family. As to quaternary structure, may self-associate in muscle cells under oxidative stress. Binds F-actin. Interacts with ACTN2; ACTN2 is proposed to anchor SYOP2 at Z lines in mature myocytes. Interacts with AKAP6, PPP3CA and CAMK2A. Interacts (phosphorylated form) with YWHAB; YWHAB competes with ACTN2 for interaction with SYNPO2. Interacts with KPNA2; mediating nuclear import of SYNOP2; dependent on interaction with YWHAB. Interacts with IPO13; may be implicated in SYNOP2 nuclear import. Interacts with ZYX, FLNC, ILK. Interacts with BAG3 (via WW 1 domain). May associate with the CASA complex consisting of HSPA8, HSPB8 and BAG3. Interacts with VPS18. In terms of processing, phosphorylated by PKA, and by CaMK2 at multiple sites. Dephosphorylated by calcineurin at Ser-555 and Thr-602; abrogating interaction with YWHAB and impairing nuclear import. As to expression, expressed in skeletal muscle, heart, colon, stomach, uterus and lung. Expression is restricted to muscle cell layers in colon, uterus and stomach.

It is found in the nucleus. It localises to the cytoplasm. Its subcellular location is the myofibril. The protein resides in the sarcomere. The protein localises to the z line. It is found in the cell junction. It localises to the focal adhesion. In terms of biological role, has an actin-binding and actin-bundling activity. Can induce the formation of F-actin networks. At the sarcomeric Z lines is proposed to act as adapter protein that links nascent myofibers to the sarcolemma via ZYX and may play a role in early assembly and stabilization of the Z lines. Involved in autophagosome formation. May play a role in chaperone-assisted selective autophagy (CASA) involved in Z lines maintenance in striated muscle under mechanical tension; may link the client-processing CASA chaperone machinery to a membrane-tethering and fusion complex providing autophagosome membranes. Involved in regulation of cell migration. May be a tumor suppressor. In Mus musculus (Mouse), this protein is Synaptopodin-2 (Synpo2).